Consider the following 364-residue polypeptide: Autophagy-related protein 5 (364 aa).

Residues 1 to 13 (MASPNPYSYSPQL) show a composition bias toward polar residues. Residues 1–103 (MASPNPYSYS…SLPPKPKPSS (103 aa)) form a disordered region. Positions 28–42 (SSPSFRSTPFRSSRG) are enriched in low complexity. Over residues 43–53 (TGAGTGIGLGL) the composition is skewed to gly residues. Residues 72–82 (RSGDGSHDDLP) are compositionally biased toward basic and acidic residues. A Glycyl lysine isopeptide (Lys-Gly) (interchain with G-Cter in ATG12) cross-link involves residue Lys-202. The tract at residues 262–306 (PSSPSPPSSDQQQPQRPGGSSSSGSYRVMQTLVPPRGPNNRTPQT) is disordered. Residues 269–286 (SSDQQQPQRPGGSSSSGS) show a composition bias toward low complexity.

The protein belongs to the ATG5 family. As to quaternary structure, conjugated with atg12. Post-translationally, conjugated to atg12; which is essential for autophagy.

It localises to the preautophagosomal structure membrane. Functionally, involved in cytoplasm to vacuole transport (Cvt) and autophagic vesicle formation. Autophagy is essential for maintenance of amino acid levels and protein synthesis under nitrogen starvation. Required for selective autophagic degradation of the nucleus (nucleophagy). Also required for mitophagy, which eliminates defective or superfluous mitochondria in order to fulfill cellular energy requirements and prevent excess ROS production. Conjugation with atg12, through a ubiquitin-like conjugating system involving apg-5/atg7 as an E1-like activating enzyme and atg10 as an E2-like conjugating enzyme, is essential for its function. The atg12-apg-4/atg5 conjugate acts as an E3-like enzyme which is required for lipidation of apg-6/atg8 and apg-6/atg8 association to the vesicle membranes. The protein is Autophagy-related protein 5 (apg-4) of Neurospora crassa (strain ATCC 24698 / 74-OR23-1A / CBS 708.71 / DSM 1257 / FGSC 987).